An 81-amino-acid polypeptide reads, in one-letter code: Large ribosomal subunit protein uL23 (81 aa).

This sequence belongs to the universal ribosomal protein uL23 family. In terms of assembly, part of the 50S ribosomal subunit. Contacts protein L29.

Binds to 23S rRNA. One of the proteins that surrounds the polypeptide exit tunnel on the outside of the ribosome. This Pyrobaculum aerophilum (strain ATCC 51768 / DSM 7523 / JCM 9630 / CIP 104966 / NBRC 100827 / IM2) protein is Large ribosomal subunit protein uL23.